The chain runs to 177 residues: Peptide methionine sulfoxide reductase MsrA (177 aa).

Cys11 is a catalytic residue.

It belongs to the MsrA Met sulfoxide reductase family.

It catalyses the reaction L-methionyl-[protein] + [thioredoxin]-disulfide + H2O = L-methionyl-(S)-S-oxide-[protein] + [thioredoxin]-dithiol. The enzyme catalyses [thioredoxin]-disulfide + L-methionine + H2O = L-methionine (S)-S-oxide + [thioredoxin]-dithiol. In terms of biological role, has an important function as a repair enzyme for proteins that have been inactivated by oxidation. Catalyzes the reversible oxidation-reduction of methionine sulfoxide in proteins to methionine. This is Peptide methionine sulfoxide reductase MsrA from Picrophilus torridus (strain ATCC 700027 / DSM 9790 / JCM 10055 / NBRC 100828 / KAW 2/3).